Reading from the N-terminus, the 156-residue chain is Pilin-like protein PilA1 (156 aa).

The propeptide at 1–5 is leader sequence; it reads MTRRG. L6 carries the N-methylleucine modification. The chain crosses the membrane as a helical span at residues 6–29; that stretch reads LTLLELLLVLGILGVLLGLALPLL.

Its subcellular location is the cell inner membrane. The protein resides in the cell outer membrane. The protein localises to the periplasm. Plays an essential role in natural DNA transformation but is not required for pilus biogenesis. This is Pilin-like protein PilA1 (pilA1) from Thermus thermophilus (strain ATCC BAA-163 / DSM 7039 / HB27).